The following is a 95-amino-acid chain: Large ribosomal subunit protein bL27 (95 aa).

Positions 1–12 are excised as a propeptide; it reads MLLIKKINLQFF. Residues 17-37 are disordered; sequence GVGSTKNGRDSNPKYLGAKKS.

The protein belongs to the bacterial ribosomal protein bL27 family. In terms of processing, the N-terminus is cleaved by ribosomal processing cysteine protease Prp.

This is Large ribosomal subunit protein bL27 from Malacoplasma penetrans (strain HF-2) (Mycoplasma penetrans).